A 478-amino-acid chain; its full sequence is Stromelysin-1 (478 aa).

Positions 1–17 (MQNLPALLLFCGVVCSA) are cleaved as a signal peptide. A propeptide spans 18-99 (YPVDRAAEDE…PRCGVPDVGD (82 aa)) (activation peptide). A Cysteine switch motif is present at residues 90-97 (PRCGVPDV). Residue C92 coordinates Zn(2+). Ca(2+) is bound by residues D124 and D158. Zn(2+)-binding residues include H168 and D170. Positions 175, 176, 178, and 180 each coordinate Ca(2+). H183 is a Zn(2+) binding site. Residues G190 and D194 each contribute to the Ca(2+) site. H196 lines the Zn(2+) pocket. Residues D198, D199, and E201 each coordinate Ca(2+). H218 is a binding site for Zn(2+). E219 is an active-site residue. H222 and H228 together coordinate Zn(2+). Residues 260–286 (QSLYGGPPSDSSNDPVVPTESVPPGPG) form a disordered region. A compositionally biased stretch (low complexity) spans 266–277 (PPSDSSNDPVVP). Hemopexin repeat units lie at residues 288 to 337 (PAAC…WPSL), 338 to 384 (PSGL…GFPP), 386 to 434 (VKKI…FPGV), and 435 to 478 (DSKV…WLNC). C291 and C478 form a disulfide bridge. D298 serves as a coordination point for Ca(2+). D390 and D439 together coordinate Ca(2+). N452 carries an N-linked (GlcNAc...) asparagine glycan.

This sequence belongs to the peptidase M10A family. Ca(2+) is required as a cofactor. Requires Zn(2+) as cofactor.

It localises to the secreted. Its subcellular location is the extracellular space. It is found in the extracellular matrix. The enzyme catalyses Preferential cleavage where P1', P2' and P3' are hydrophobic residues.. Functionally, metalloproteinase with a rather broad substrate specificity that can degrade fibronectin, laminin, gelatins of type I, III, IV, and V; collagens III, IV, X, and IX, and cartilage proteoglycans. Activates different molecules including growth factors, plasminogen or other matrix metalloproteinases such as MMP9. Once released into the extracellular matrix (ECM), the inactive pro-enzyme is activated by the plasmin cascade signaling pathway. Also acts intracellularly. For example, in dopaminergic neurons, gets activated by the serine protease HTRA2 upon stress and plays a pivotal role in DA neuronal degeneration by mediating microglial activation and alpha-synuclein/SNCA cleavage. In addition, plays a role in immune response and possesses antiviral activity against various viruses. Mechanistically, translocates from the cytoplasm into the cell nucleus upon virus infection to influence NF-kappa-B activities. This chain is Stromelysin-1 (MMP3), found in Canis lupus familiaris (Dog).